Reading from the N-terminus, the 410-residue chain is MKDTVSQPAGGRGATAPRPADAASPSCGSSPSADSVSVVLAGGGTAGHVEPAMAVADALVALDPRVRITALGTLRGLETRLVPQRGYHLELITAVPMPRKPGGDLARLPSRVWRAVREARDVLDDVDADVVVGFGGYVALPAYLAARGLPLPPRRRRRIPVVIHEANARAGLANRVGAHTADRVLSAVPDSGLRRAEVVGVPVRASIAALDRAVLRAEARAHFGFPDDARVLLVFGGSQGAVSLNRAVSGAAADLAAAGVCVLHAHGPQNVLELRRRAQGDPPYVAVPYLDRMELAYAAADLVICRAGAMTVAEVSAVGLPAIYVPLPIGNGEQRLNALPVVNAGGGMVVADAALTPELVARQVAGLLTDPARLAAMTAAAARVGHRDAAGQVARAALAVATGAGARTTT.

The interval 1-35 (MKDTVSQPAGGRGATAPRPADAASPSCGSSPSADS) is disordered. Residues 14–35 (ATAPRPADAASPSCGSSPSADS) are compositionally biased toward low complexity. UDP-N-acetyl-alpha-D-glucosamine contacts are provided by residues 45–47 (TAG), Asn167, Arg204, Ser238, and Gln334.

It belongs to the glycosyltransferase 28 family. MurG subfamily.

It localises to the cell membrane. The enzyme catalyses di-trans,octa-cis-undecaprenyl diphospho-N-acetyl-alpha-D-muramoyl-L-alanyl-D-glutamyl-meso-2,6-diaminopimeloyl-D-alanyl-D-alanine + UDP-N-acetyl-alpha-D-glucosamine = di-trans,octa-cis-undecaprenyl diphospho-[N-acetyl-alpha-D-glucosaminyl-(1-&gt;4)]-N-acetyl-alpha-D-muramoyl-L-alanyl-D-glutamyl-meso-2,6-diaminopimeloyl-D-alanyl-D-alanine + UDP + H(+). It functions in the pathway cell wall biogenesis; peptidoglycan biosynthesis. Cell wall formation. Catalyzes the transfer of a GlcNAc subunit on undecaprenyl-pyrophosphoryl-MurNAc-pentapeptide (lipid intermediate I) to form undecaprenyl-pyrophosphoryl-MurNAc-(pentapeptide)GlcNAc (lipid intermediate II). The sequence is that of UDP-N-acetylglucosamine--N-acetylmuramyl-(pentapeptide) pyrophosphoryl-undecaprenol N-acetylglucosamine transferase from Mycobacterium tuberculosis (strain ATCC 25177 / H37Ra).